We begin with the raw amino-acid sequence, 312 residues long: Glyoxylate/hydroxypyruvate reductase A (312 aa).

The active site involves Arg227. Catalysis depends on His275, which acts as the Proton donor.

This sequence belongs to the D-isomer specific 2-hydroxyacid dehydrogenase family. GhrA subfamily.

Its subcellular location is the cytoplasm. The catalysed reaction is glycolate + NADP(+) = glyoxylate + NADPH + H(+). It carries out the reaction (R)-glycerate + NAD(+) = 3-hydroxypyruvate + NADH + H(+). It catalyses the reaction (R)-glycerate + NADP(+) = 3-hydroxypyruvate + NADPH + H(+). In terms of biological role, catalyzes the NADPH-dependent reduction of glyoxylate and hydroxypyruvate into glycolate and glycerate, respectively. The sequence is that of Glyoxylate/hydroxypyruvate reductase A from Escherichia coli O6:K15:H31 (strain 536 / UPEC).